A 311-amino-acid polypeptide reads, in one-letter code: 4-hydroxy-3-methylbut-2-enyl diphosphate reductase (311 aa).

C12 is a binding site for [4Fe-4S] cluster. Residues H43 and H81 each contribute to the (2E)-4-hydroxy-3-methylbut-2-enyl diphosphate site. H43 and H81 together coordinate dimethylallyl diphosphate. H43 and H81 together coordinate isopentenyl diphosphate. Position 103 (C103) interacts with [4Fe-4S] cluster. H131 is a binding site for (2E)-4-hydroxy-3-methylbut-2-enyl diphosphate. H131 lines the dimethylallyl diphosphate pocket. H131 lines the isopentenyl diphosphate pocket. E133 serves as the catalytic Proton donor. T170 is a (2E)-4-hydroxy-3-methylbut-2-enyl diphosphate binding site. C198 serves as a coordination point for [4Fe-4S] cluster. Positions 226, 228, and 271 each coordinate (2E)-4-hydroxy-3-methylbut-2-enyl diphosphate. Dimethylallyl diphosphate is bound by residues S226, N228, and S271. The isopentenyl diphosphate site is built by S226, N228, and S271.

The protein belongs to the IspH family. [4Fe-4S] cluster serves as cofactor.

It carries out the reaction isopentenyl diphosphate + 2 oxidized [2Fe-2S]-[ferredoxin] + H2O = (2E)-4-hydroxy-3-methylbut-2-enyl diphosphate + 2 reduced [2Fe-2S]-[ferredoxin] + 2 H(+). The enzyme catalyses dimethylallyl diphosphate + 2 oxidized [2Fe-2S]-[ferredoxin] + H2O = (2E)-4-hydroxy-3-methylbut-2-enyl diphosphate + 2 reduced [2Fe-2S]-[ferredoxin] + 2 H(+). The protein operates within isoprenoid biosynthesis; dimethylallyl diphosphate biosynthesis; dimethylallyl diphosphate from (2E)-4-hydroxy-3-methylbutenyl diphosphate: step 1/1. Its pathway is isoprenoid biosynthesis; isopentenyl diphosphate biosynthesis via DXP pathway; isopentenyl diphosphate from 1-deoxy-D-xylulose 5-phosphate: step 6/6. Catalyzes the conversion of 1-hydroxy-2-methyl-2-(E)-butenyl 4-diphosphate (HMBPP) into a mixture of isopentenyl diphosphate (IPP) and dimethylallyl diphosphate (DMAPP). Acts in the terminal step of the DOXP/MEP pathway for isoprenoid precursor biosynthesis. The protein is 4-hydroxy-3-methylbut-2-enyl diphosphate reductase of Brevibacillus brevis (strain 47 / JCM 6285 / NBRC 100599).